The primary structure comprises 284 residues: D-tagatose-1,6-bisphosphate aldolase subunit GatY (284 aa).

Catalysis depends on aspartate 82, which acts as the Proton donor. Residues histidine 83 and histidine 180 each coordinate Zn(2+). Glycine 181 lines the dihydroxyacetone phosphate pocket. Histidine 208 provides a ligand contact to Zn(2+). Residues 209-211 (GAS) and 230-233 (NVAT) contribute to the dihydroxyacetone phosphate site.

It belongs to the class II fructose-bisphosphate aldolase family. TagBP aldolase GatY subfamily. In terms of assembly, forms a complex with GatZ. Requires Zn(2+) as cofactor.

The enzyme catalyses D-tagatofuranose 1,6-bisphosphate = D-glyceraldehyde 3-phosphate + dihydroxyacetone phosphate. It functions in the pathway carbohydrate metabolism; D-tagatose 6-phosphate degradation; D-glyceraldehyde 3-phosphate and glycerone phosphate from D-tagatose 6-phosphate: step 2/2. Its function is as follows. Catalytic subunit of the tagatose-1,6-bisphosphate aldolase GatYZ, which catalyzes the reversible aldol condensation of dihydroxyacetone phosphate (DHAP or glycerone-phosphate) with glyceraldehyde 3-phosphate (G3P) to produce tagatose 1,6-bisphosphate (TBP). Requires GatZ subunit for full activity and stability. Is involved in the catabolism of galactitol. This is D-tagatose-1,6-bisphosphate aldolase subunit GatY from Escherichia coli O45:K1 (strain S88 / ExPEC).